A 407-amino-acid polypeptide reads, in one-letter code: Phosphoglycerate kinase (407 aa).

Substrate-binding positions include 24–26 (DIN), Arg-39, 60–63 (HQSR), Arg-117, and Arg-157. Residues Glu-330 and 355-358 (GGHI) contribute to the ATP site.

Belongs to the phosphoglycerate kinase family.

Its subcellular location is the cytoplasm. It carries out the reaction (2R)-3-phosphoglycerate + ATP = (2R)-3-phospho-glyceroyl phosphate + ADP. It participates in carbohydrate degradation; glycolysis; pyruvate from D-glyceraldehyde 3-phosphate: step 2/5. In Archaeoglobus fulgidus (strain ATCC 49558 / DSM 4304 / JCM 9628 / NBRC 100126 / VC-16), this protein is Phosphoglycerate kinase (pgk).